The sequence spans 469 residues: Histone chaperone rtt-106 (469 aa).

Disordered regions lie at residues 54-73 (EEPA…PNGA) and 364-469 (MAEQ…EGEE). 2 stretches are compositionally biased toward basic and acidic residues: residues 364-379 (MAEQ…ENAK) and 402-415 (ELER…QRLQ). 2 stretches are compositionally biased toward acidic residues: residues 416–433 (DEED…EGES) and 440–469 (SEEE…EGEE).

This sequence belongs to the RTT106 family. In terms of assembly, interacts with histones H3 and H4.

The protein localises to the nucleus. It is found in the chromosome. Functionally, histones H3 and H4 chaperone involved in the nucleosome formation and heterochromatin silencing. Required for the deposition of H3K56ac-carrying H3-H4 complex onto newly-replicated DNA. Plays a role in the transcriptional regulation of the cell-cycle dependent histone genes by creating a repressive structure at the core histone gene promoter. This Neurospora crassa (strain ATCC 24698 / 74-OR23-1A / CBS 708.71 / DSM 1257 / FGSC 987) protein is Histone chaperone rtt-106 (rtt-106).